A 555-amino-acid chain; its full sequence is Protein NRT1/ PTR FAMILY 2.1 (555 aa).

The next 12 membrane-spanning stretches (helical) occupy residues 32-52, 68-88, 91-111, 127-147, 175-195, 205-225, 324-344, 369-389, 401-421, 437-457, 476-496, and 517-537; these read TLLG…VFLI, IVNG…DSFF, IPVI…LTLI, ILCQ…LALV, FFNW…TAIV, LGFG…ISGK, VLPL…QASM, VIVL…IYPI, LQQV…SAIV, VLWL…HYMA, SVTS…INLI, and WVLV…SWYF.

Belongs to the major facilitator superfamily. Proton-dependent oligopeptide transporter (POT/PTR) (TC 2.A.17) family. As to expression, expressed in roots.

The protein resides in the membrane. Transporter involved in a passive nitrate efflux. This chain is Protein NRT1/ PTR FAMILY 2.1 (NPF2.1), found in Arabidopsis thaliana (Mouse-ear cress).